A 348-amino-acid polypeptide reads, in one-letter code: Lipoyl synthase (348 aa).

[4Fe-4S] cluster contacts are provided by Cys-55, Cys-60, Cys-66, Cys-81, Cys-85, Cys-88, and Ser-292. In terms of domain architecture, Radical SAM core spans 67–281; the sequence is WESREATFLI…SDEAYEIGFA (215 aa).

Belongs to the radical SAM superfamily. Lipoyl synthase family. The cofactor is [4Fe-4S] cluster.

The protein resides in the cytoplasm. It carries out the reaction [[Fe-S] cluster scaffold protein carrying a second [4Fe-4S](2+) cluster] + N(6)-octanoyl-L-lysyl-[protein] + 2 oxidized [2Fe-2S]-[ferredoxin] + 2 S-adenosyl-L-methionine + 4 H(+) = [[Fe-S] cluster scaffold protein] + N(6)-[(R)-dihydrolipoyl]-L-lysyl-[protein] + 4 Fe(3+) + 2 hydrogen sulfide + 2 5'-deoxyadenosine + 2 L-methionine + 2 reduced [2Fe-2S]-[ferredoxin]. It participates in protein modification; protein lipoylation via endogenous pathway; protein N(6)-(lipoyl)lysine from octanoyl-[acyl-carrier-protein]: step 2/2. Functionally, catalyzes the radical-mediated insertion of two sulfur atoms into the C-6 and C-8 positions of the octanoyl moiety bound to the lipoyl domains of lipoate-dependent enzymes, thereby converting the octanoylated domains into lipoylated derivatives. The protein is Lipoyl synthase of Corynebacterium efficiens (strain DSM 44549 / YS-314 / AJ 12310 / JCM 11189 / NBRC 100395).